Reading from the N-terminus, the 362-residue chain is Heat-inducible transcription repressor HrcA (362 aa).

It belongs to the HrcA family.

Negative regulator of class I heat shock genes (grpE-dnaK-dnaJ and groELS operons). Prevents heat-shock induction of these operons. In Nitrobacter winogradskyi (strain ATCC 25391 / DSM 10237 / CIP 104748 / NCIMB 11846 / Nb-255), this protein is Heat-inducible transcription repressor HrcA.